We begin with the raw amino-acid sequence, 306 residues long: Aspartate carbamoyltransferase catalytic subunit (306 aa).

Positions 55 and 56 each coordinate carbamoyl phosphate. Lysine 84 lines the L-aspartate pocket. Carbamoyl phosphate-binding residues include arginine 105, histidine 133, and glutamine 136. Positions 166 and 227 each coordinate L-aspartate. Residues leucine 265 and proline 266 each contribute to the carbamoyl phosphate site.

Belongs to the aspartate/ornithine carbamoyltransferase superfamily. ATCase family. As to quaternary structure, heterododecamer (2C3:3R2) of six catalytic PyrB chains organized as two trimers (C3), and six regulatory PyrI chains organized as three dimers (R2).

The catalysed reaction is carbamoyl phosphate + L-aspartate = N-carbamoyl-L-aspartate + phosphate + H(+). Its pathway is pyrimidine metabolism; UMP biosynthesis via de novo pathway; (S)-dihydroorotate from bicarbonate: step 2/3. Functionally, catalyzes the condensation of carbamoyl phosphate and aspartate to form carbamoyl aspartate and inorganic phosphate, the committed step in the de novo pyrimidine nucleotide biosynthesis pathway. The polypeptide is Aspartate carbamoyltransferase catalytic subunit (Neisseria gonorrhoeae (strain NCCP11945)).